The sequence spans 81 residues: Large ribosomal subunit protein bL31B (81 aa).

Belongs to the bacterial ribosomal protein bL31 family. Type B subfamily. In terms of assembly, part of the 50S ribosomal subunit.

In Cutibacterium acnes (strain DSM 16379 / KPA171202) (Propionibacterium acnes), this protein is Large ribosomal subunit protein bL31B.